An 81-amino-acid polypeptide reads, in one-letter code: U17-lycotoxin-Ls1a (81 aa).

The signal sequence occupies residues 1–22 (MSSKVQAVLLLVGVITFLAVHA). Positions 23–34 (QEELSENTESER) are excised as a propeptide. 3 disulfide bridges follow: Cys36–Cys51, Cys50–Cys67, and Cys58–Cys65.

The protein belongs to the neurotoxin 02 (plectoxin) family. As to expression, expressed by the venom gland.

It is found in the secreted. This chain is U17-lycotoxin-Ls1a, found in Lycosa singoriensis (Wolf spider).